Here is a 128-residue protein sequence, read N- to C-terminus: Protein Wnt-2b-B (128 aa).

2 disulfide bridges follow: Cys3–Cys16 and Cys5–Cys11. Ser8 carries O-palmitoleoyl serine; by PORCN lipidation. N-linked (GlcNAc...) asparagine glycosylation occurs at Asn48. Disulfide bonds link Cys90/Cys105 and Cys127/Cys128.

The protein belongs to the Wnt family. In terms of processing, palmitoleoylation is required for efficient binding to frizzled receptors. Depalmitoleoylation leads to Wnt signaling pathway inhibition.

It is found in the secreted. The protein resides in the extracellular space. The protein localises to the extracellular matrix. Functionally, ligand for members of the frizzled family of seven transmembrane receptors. Functions in the canonical Wnt/beta-catenin signaling pathway. The sequence is that of Protein Wnt-2b-B (wnt2b-b) from Xenopus laevis (African clawed frog).